The following is a 396-amino-acid chain: Activity-regulated cytoskeleton-associated protein (396 aa).

Positions 54 to 78 form a coiled coil; sequence SKQVERELKGLHRSVGKLESNLDGY. Residues 89 to 100 are interaction with SH3GL1 or SH3GL3; that stretch reads KSIKACLCRCQE. The tract at residues 195–214 is interaction with DNM2; it reads QPWVPGEDGQPSPGVDTQIF. Ser260 carries the post-translational modification Phosphoserine. Glycyl lysine isopeptide (Lys-Gly) (interchain with G-Cter in ubiquitin) cross-links involve residues Lys268 and Lys269. Residue Thr278 is modified to Phosphothreonine. The interval 356–396 is disordered; the sequence is QDDLEQAAEPAGPHLPVEDEAETLTPAPNSESVASDRTQPE. The span at 381–396 shows a compositional bias: polar residues; it reads PAPNSESVASDRTQPE.

It belongs to the ARC/ARG3.1 family. In terms of assembly, homooligomer; homooligomerizes into virion-like capsids. Interacts with SH3GL1/endophilin-2, SH3GL3/endophilin-3 and DNM2/DYN2. Interacts with CAMK2B (in the kinase inactive state); leading to target ARC to inactive synapses. Interacts with PSEN1. Post-translationally, palmitoylation anchors the protein into the membrane by allowing direct insertion into the hydrophobic core of the lipid bilayer. In terms of processing, ubiquitinated by UBE3A, leading to its degradation by the proteasome, thereby promoting AMPA receptors (AMPARs) expression at synapses. Ubiquitinated by RNF216 at Lys-268 and Lys-269 limiting ARC protein levels induced by synaptic activity and thus regulating ARC-dependent forms of synaptic plasticity. Phosphorylation at Ser-260 by CaMK2 prevents homooligomerization into virion-like capsids by disrupting an interaction surface essential for high-order oligomerization. Phosphorylation by CaMK2 inhibits synaptic activity.

It is found in the extracellular vesicle membrane. It localises to the postsynaptic cell membrane. The protein resides in the synapse. The protein localises to the postsynaptic density. Its subcellular location is the early endosome membrane. It is found in the cell projection. It localises to the dendrite. The protein resides in the cytoplasm. The protein localises to the cytoskeleton. Its subcellular location is the cell cortex. It is found in the dendritic spine. It localises to the cytoplasmic vesicle. The protein resides in the secretory vesicle. The protein localises to the acrosome. Its subcellular location is the clathrin-coated vesicle membrane. Functionally, master regulator of synaptic plasticity that self-assembles into virion-like capsids that encapsulate RNAs and mediate intercellular RNA transfer in the nervous system. ARC protein is released from neurons in extracellular vesicles that mediate the transfer of ARC mRNA into new target cells, where ARC mRNA can undergo activity-dependent translation. ARC capsids are endocytosed and are able to transfer ARC mRNA into the cytoplasm of neurons. Acts as a key regulator of synaptic plasticity: required for protein synthesis-dependent forms of long-term potentiation (LTP) and depression (LTD) and for the formation of long-term memory. Regulates synaptic plasticity by promoting endocytosis of AMPA receptors (AMPARs) in response to synaptic activity: this endocytic pathway maintains levels of surface AMPARs in response to chronic changes in neuronal activity through synaptic scaling, thereby contributing to neuronal homeostasis. Acts as a postsynaptic mediator of activity-dependent synapse elimination in the developing cerebellum by mediating elimination of surplus climbing fiber synapses. Accumulates at weaker synapses, probably to prevent their undesired enhancement. This suggests that ARC-containing virion-like capsids may be required to eliminate synaptic material. Required to transduce experience into long-lasting changes in visual cortex plasticity and for long-term memory. Involved in postsynaptic trafficking and processing of amyloid-beta A4 (APP) via interaction with PSEN1. In addition to its role in synapses, also involved in the regulation of the immune system: specifically expressed in skin-migratory dendritic cells and regulates fast dendritic cell migration, thereby regulating T-cell activation. This chain is Activity-regulated cytoskeleton-associated protein, found in Homo sapiens (Human).